The chain runs to 469 residues: 3-isopropylmalate dehydratase large subunit 1 (469 aa).

Positions 344, 404, and 407 each coordinate [4Fe-4S] cluster.

The protein belongs to the aconitase/IPM isomerase family. LeuC type 1 subfamily. As to quaternary structure, heterodimer of LeuC and LeuD. Requires [4Fe-4S] cluster as cofactor.

It carries out the reaction (2R,3S)-3-isopropylmalate = (2S)-2-isopropylmalate. It participates in amino-acid biosynthesis; L-leucine biosynthesis; L-leucine from 3-methyl-2-oxobutanoate: step 2/4. In terms of biological role, catalyzes the isomerization between 2-isopropylmalate and 3-isopropylmalate, via the formation of 2-isopropylmaleate. The chain is 3-isopropylmalate dehydratase large subunit 1 from Rubrobacter xylanophilus (strain DSM 9941 / JCM 11954 / NBRC 16129 / PRD-1).